The sequence spans 752 residues: Photosystem I P700 chlorophyll a apoprotein A1 (752 aa).

A run of 8 helical transmembrane segments spans residues 73–96 (IFSA…FHGA), 159–182 (LYWI…FHYH), 198–222 (MNHH…HVAL), 294–312 (IAHH…GHMY), 349–372 (WHAQ…HHMY), 388–414 (LSLF…IFMV), 436–458 (SIIA…FYIH), and 533–551 (FMVH…LILL). Cys-575 and Cys-584 together coordinate [4Fe-4S] cluster. The next 2 helical transmembrane spans lie at 591–612 (HVFL…HFSW) and 666–688 (ASAY…MFLF). Chlorophyll a' is bound at residue His-677. Positions 685 and 693 each coordinate chlorophyll a. Trp-694 lines the phylloquinone pocket. A helical membrane pass occupies residues 726 to 746 (AVGLAHYLLGGIGTTWAFFLA).

The protein belongs to the PsaA/PsaB family. In terms of assembly, the PsaA/B heterodimer binds the P700 chlorophyll special pair and subsequent electron acceptors. PSI consists of a core antenna complex that captures photons, and an electron transfer chain that converts photonic excitation into a charge separation. The eukaryotic PSI reaction center is composed of at least 11 subunits. The cofactor is P700 is a chlorophyll a/chlorophyll a' dimer, A0 is one or more chlorophyll a, A1 is one or both phylloquinones and FX is a shared 4Fe-4S iron-sulfur center..

Its subcellular location is the plastid. The protein localises to the chloroplast thylakoid membrane. It carries out the reaction reduced [plastocyanin] + hnu + oxidized [2Fe-2S]-[ferredoxin] = oxidized [plastocyanin] + reduced [2Fe-2S]-[ferredoxin]. Functionally, psaA and PsaB bind P700, the primary electron donor of photosystem I (PSI), as well as the electron acceptors A0, A1 and FX. PSI is a plastocyanin/cytochrome c6-ferredoxin oxidoreductase, converting photonic excitation into a charge separation, which transfers an electron from the donor P700 chlorophyll pair to the spectroscopically characterized acceptors A0, A1, FX, FA and FB in turn. Oxidized P700 is reduced on the lumenal side of the thylakoid membrane by plastocyanin or cytochrome c6. This chain is Photosystem I P700 chlorophyll a apoprotein A1, found in Phaeodactylum tricornutum (strain CCAP 1055/1).